The chain runs to 81 residues: MKVAIVFLSLLVLAFASESIEENREEFPVEESARCADINGACKSDCDCCGDSVTCDCYWSDSCKCRESNFKIGMAIRKKFC.

A signal peptide spans 1-16 (MKVAIVFLSLLVLAFA). The propeptide occupies 17–34 (SESIEENREEFPVEESAR). 5 cysteine pairs are disulfide-bonded: C35–C49, C42–C55, C46–C81, C48–C65, and C57–C63.

This sequence belongs to the neurotoxin 03 (Tx2) family. 05 subfamily. In terms of tissue distribution, expressed by the venom gland.

It localises to the secreted. Functionally, this insecticidal neurotoxin targets two types of channels/receptors. It reversibly inhibits the N-methyl-D-aspartate (NMDA)-subtype of ionotropic glutamate receptor (GRIN). It inhibits glutamate uptake from rat brain synaptosomes, and blocks GRIN in hippocampal slices. It also acts on sodium channels of both insects and mammals. On sodium channel insects, it strongly slows down channel inactivation (EC(50)=212.5 nM) and causes an increase (105%) in peak amplitude (at 1 uM) of B.germanica sodium channel (Nav), whereas it inhibits all mammalien sodium channels tested with the following order of potency: Nav1.3/SCN3A (IC(50)=1.5 uM) &gt; Nav1.6/SCN8A &gt; Nav1.5/SCN5A &gt; Nav1.4/SCN4A &gt;= Nav1.2/SCN2A. In vivo, it is highly toxic to house fly (Musca domestica), cockroach (Periplaneta americana), and cricket (Acheta domesticus). In different rat pain models (induced by PGE2, carrageenan or glutamate), it shows antinociceptive effect that may be related to an inhibitory activity on the glutamatergic system. The sequence is that of GAMMA-ctenitoxin-Pn1a from Phoneutria nigriventer (Brazilian armed spider).